A 234-amino-acid polypeptide reads, in one-letter code: Purine nucleoside phosphorylase DeoD-type (234 aa).

An a purine D-ribonucleoside-binding site is contributed by His-5. Phosphate is bound by residues Gly-21, Arg-25, Arg-44, and 88-91; that span reads RIGT. Residues 180 to 182 and 204 to 205 each bind a purine D-ribonucleoside; these read DME and SD. The Proton donor role is filled by Asp-205.

Belongs to the PNP/UDP phosphorylase family. As to quaternary structure, homohexamer; trimer of homodimers.

It catalyses the reaction a purine D-ribonucleoside + phosphate = a purine nucleobase + alpha-D-ribose 1-phosphate. The enzyme catalyses a purine 2'-deoxy-D-ribonucleoside + phosphate = a purine nucleobase + 2-deoxy-alpha-D-ribose 1-phosphate. Functionally, catalyzes the reversible phosphorolytic breakdown of the N-glycosidic bond in the beta-(deoxy)ribonucleoside molecules, with the formation of the corresponding free purine bases and pentose-1-phosphate. This is Purine nucleoside phosphorylase DeoD-type from Buchnera aphidicola subsp. Acyrthosiphon pisum (strain APS) (Acyrthosiphon pisum symbiotic bacterium).